The sequence spans 791 residues: RAS guanyl-releasing protein 1 (791 aa).

One can recognise an N-terminal Ras-GEF domain in the interval 49 to 172 (LGKLSKGASL…RLIDTAQINS (124 aa)). A ras exchanger motif region; required for transforming activity region spans residues 53–106 (SKGASLDELIQMCIQAFDLDGNMGQNNELLQIMLTMHGFLIPSTELLIKLRTLY). Positions 201–432 (EPQELAEHLT…YELSYAREPR (232 aa)) constitute a Ras-GEF domain. 2 EF-hand domains span residues 466 to 501 (HVQRMVDSVFKNYDLDQDGYISQEEFEKIAASFPFS) and 502 to 528 (FCVMDKDREGLISRQEITAYFMRASSI). Positions 479, 481, 483, 485, 490, 506, 508, 510, and 517 each coordinate Ca(2+). The Phorbol-ester/DAG-type zinc finger occupies 537-587 (LHNFQETTYLRPTFCDNCAGFLWGVIKQGYRCKDCGMNCHKQCKELVVFEC). Positions 671–715 (TQTENETQSLCLQVPSPPRSRTPDLTSHLPISPMPSPCPSPVPTR) are disordered. A compositionally biased stretch (polar residues) spans 672–681 (QTENETQSLC). Residues 702-712 (SPMPSPCPSPV) are compositionally biased toward pro residues. The stretch at 728–783 (IRKARAELRGGKAGIQELEKEKVFLKEENTALKIQLKDAHRRVETLRAELRKYVLD) forms a coiled coil.

The protein belongs to the RASGRP family.

It is found in the cytoplasm. The protein localises to the cytosol. It localises to the cell membrane. Its subcellular location is the golgi apparatus membrane. The protein resides in the endoplasmic reticulum membrane. Its activity is regulated as follows. Regulated by F-actin polymerization and probably by calcium. Functions as a diacylglycerol (DAG)-regulated nucleotide exchange factor specifically activating Ras through the exchange of bound GDP for GTP. This Xenopus laevis (African clawed frog) protein is RAS guanyl-releasing protein 1 (rasgrp1).